Here is a 339-residue protein sequence, read N- to C-terminus: Glucokinase (339 aa).

16-21 (GDIGGT) is a binding site for ATP.

This sequence belongs to the bacterial glucokinase family.

The protein localises to the cytoplasm. The catalysed reaction is D-glucose + ATP = D-glucose 6-phosphate + ADP + H(+). This chain is Glucokinase, found in Sinorhizobium medicae (strain WSM419) (Ensifer medicae).